Reading from the N-terminus, the 296-residue chain is Pantothenate synthetase (296 aa).

M37 to H44 lines the ATP pocket. H44 (proton donor) is an active-site residue. Q68 is a (R)-pantoate binding site. Residue Q68 participates in beta-alanine binding. G160–D163 provides a ligand contact to ATP. Residue Q166 coordinates (R)-pantoate. Residues V189 and T197–R200 each bind ATP.

It belongs to the pantothenate synthetase family. In terms of assembly, homodimer.

Its subcellular location is the cytoplasm. The catalysed reaction is (R)-pantoate + beta-alanine + ATP = (R)-pantothenate + AMP + diphosphate + H(+). Its pathway is cofactor biosynthesis; (R)-pantothenate biosynthesis; (R)-pantothenate from (R)-pantoate and beta-alanine: step 1/1. In terms of biological role, catalyzes the condensation of pantoate with beta-alanine in an ATP-dependent reaction via a pantoyl-adenylate intermediate. This Thermobifida fusca (strain YX) protein is Pantothenate synthetase.